The following is a 159-amino-acid chain: Disease resistance response protein Pi176 (159 aa).

This sequence belongs to the BetVI family.

The protein is Disease resistance response protein Pi176 of Pisum sativum (Garden pea).